The chain runs to 93 residues: Small ribosomal subunit protein bS6 (93 aa).

This sequence belongs to the bacterial ribosomal protein bS6 family.

Binds together with bS18 to 16S ribosomal RNA. This is Small ribosomal subunit protein bS6 from Treponema denticola (strain ATCC 35405 / DSM 14222 / CIP 103919 / JCM 8153 / KCTC 15104).